The following is a 617-amino-acid chain: Protein kinase STUNTED (617 aa).

The interval Ser162 to Gly187 is disordered. The segment covering Phe169–Lys184 has biased composition (basic and acidic residues). Residues Phe277–Val555 enclose the Protein kinase domain. ATP is bound by residues Ile283–Val291 and Lys305. A Phosphotyrosine modification is found at Tyr350. Asp399 (proton acceptor) is an active-site residue. Residue Ser403 is modified to Phosphoserine. Thr439 carries the post-translational modification Phosphothreonine. A Phosphotyrosine modification is found at Tyr447. The disordered stretch occupies residues Asp590–Ser617. Over residues Ser591–Ser617 the composition is skewed to low complexity.

The protein belongs to the protein kinase superfamily. Ser/Thr protein kinase family. In terms of tissue distribution, expressed ubiquitously, mostly in roots, to a lower extent in leaves, floral buds and stems, and, at low levels, in flowers and siliques.

The protein resides in the cytoplasm. Promotes cell proliferation in the gibberellic acid (GA) signaling pathway, acting downstream of RGA, and possibly through a negative regulation of two cyclin-dependent kinase inhibitors SIM and SMR1. This chain is Protein kinase STUNTED, found in Arabidopsis thaliana (Mouse-ear cress).